The following is a 126-amino-acid chain: Protein chibby homolog 1 (126 aa).

The span at 1–10 (MPFFGNTFSP) shows a compositional bias: polar residues. Residues 1-26 (MPFFGNTFSPKKTPPRKSASLSNLHS) form a disordered region. Ser9 and Ser20 each carry phosphoserine. The tract at residues 60 to 112 (IAETGVSGGVDRREVQRLRRRNQQLEEENNLLRLKVDILLDMLSESTAESHLM) is minimal region for the interaction with PKD2. The stretch at 67–125 (GGVDRREVQRLRRRNQQLEEENNLLRLKVDILLDMLSESTAESHLMEKELDELRISRKR) forms a coiled coil. The leucine-zipper; mediates homodimerization stretch occupies residues 77-98 (LRRRNQQLEEENNLLRLKVDIL).

Belongs to the chibby family. Homodimer. Homodimerization is essential for nuclear localization and interaction with KPNA4 but is dispensable for interaction with CTNNB1. Interacts with polycystin-2/PKD2 and GM130. Interacts with the C-terminal region of CTNNB1. Interacts (C-terminus) with TCIM (C-terminus), TCIM competes with CTNNB1 for the interaction with CBY1. Interacts with FAM92A; this interaction facilitates targeting of FAM92A to cilium basal body. Interacts with CIBAR2. Interacts with KPNA4. As to expression, widely expressed. Expressed at higher levels in heart, skeletal muscle, kidney and placenta. Also found in brain, lung, liver and testis. Significantly down-regulated in thyroid and metastatic uterine tumors.

It is found in the nucleus speckle. The protein localises to the cytoplasm. Its subcellular location is the cytoskeleton. It localises to the cilium basal body. The protein resides in the microtubule organizing center. It is found in the centrosome. The protein localises to the centriole. Its subcellular location is the golgi apparatus. It localises to the trans-Golgi network. The protein resides in the cell projection. It is found in the cilium. The protein localises to the flagellum. Its subcellular location is the nucleus. Inhibits the Wnt/Wingless pathway by binding to CTNNB1/beta-catenin and inhibiting beta-catenin-mediated transcriptional activation through competition with TCF/LEF transcription factors. Has also been shown to play a role in regulating the intracellular trafficking of polycystin-2/PKD2 and possibly of other intracellular proteins. Promotes adipocyte and cardiomyocyte differentiation. This is Protein chibby homolog 1 (CBY1) from Homo sapiens (Human).